A 249-amino-acid chain; its full sequence is Triosephosphate isomerase (249 aa).

8–10 (NWK) provides a ligand contact to substrate. His95 acts as the Electrophile in catalysis. Glu166 acts as the Proton acceptor in catalysis. Substrate-binding positions include Gly172, Ser211, and 232–233 (GG).

The protein belongs to the triosephosphate isomerase family. In terms of assembly, homodimer.

It localises to the cytoplasm. The enzyme catalyses D-glyceraldehyde 3-phosphate = dihydroxyacetone phosphate. The protein operates within carbohydrate biosynthesis; gluconeogenesis. Its pathway is carbohydrate degradation; glycolysis; D-glyceraldehyde 3-phosphate from glycerone phosphate: step 1/1. Its function is as follows. Involved in the gluconeogenesis. Catalyzes stereospecifically the conversion of dihydroxyacetone phosphate (DHAP) to D-glyceraldehyde-3-phosphate (G3P). This is Triosephosphate isomerase from Granulibacter bethesdensis (strain ATCC BAA-1260 / CGDNIH1).